Reading from the N-terminus, the 620-residue chain is Extensin (620 aa).

A signal peptide spans 1-20 (MKLSTLFALVLLLQSTAILS). Residues 34 to 45 (LPPPVTSQPPPS) show a composition bias toward pro residues. The disordered stretch occupies residues 34–620 (LPPPVTSQPP…PPYGLLLSTP (587 aa)). An H-A-P-P repeat occupies 70–73 (HAPP). Pro residues predominate over residues 106–129 (NPPPSPVISPSHPPPSYGAPPPSH). The span at 145 to 163 (SHGHAPPSGGHTPPRGQHP) shows a compositional bias: low complexity. The stretch at 148–151 (HAPP) is one H-A-P-P repeat. Over residues 164 to 177 (PSHRRPSPPSRHGH) the composition is skewed to basic residues. The span at 178–219 (PPPPTYAQPPPTPIYSPSPQVQPPPTYSPPPPTHVQPTPSPP) shows a compositional bias: pro residues. The tract at residues 205–620 (SPPPPTHVQP…PPYGLLLSTP (416 aa)) is contains the Ser-Pro(4) repeats. A run of 2 repeats spans residues 229–235 (THRHAPP) and 236–242 (THRHAPP). A compositionally biased stretch (basic residues) spans 229–241 (THRHAPPTHRHAP). The tract at residues 229-242 (THRHAPPTHRHAPP) is 2 X 7 AA tandem repeats of T-H-R-H-A-P-P. Pro residues-rich tracts occupy residues 251–552 (HLPP…PPHW) and 562–613 (GQPP…PPPY). The tract at residues 499–600 (PPTFSPPPPR…PTPTYGQPPS (102 aa)) is 3 X approximate tandem repeats.

In terms of processing, hydroxylated on proline residues in the S-P-P-P-P repeat. Post-translationally, O-glycosylated on hydroxyprolines. Expressed in the tip of the emerging lateral roots.

It localises to the secreted. It is found in the primary cell wall. In terms of biological role, has a specialized structural function, possibly in the mechanical penetration of the cortex and epidermis of the main root. This chain is Extensin (HRGPNT3), found in Nicotiana tabacum (Common tobacco).